Reading from the N-terminus, the 136-residue chain is Basic phospholipase A2 Tgc-K49 (136 aa).

A signal peptide spans 1-15 (MRTLWIVAVLLVGEG). Cystine bridges form between Cys41–Cys130, Cys43–Cys59, Cys58–Cys110, Cys64–Cys136, Cys65–Cys103, Cys72–Cys96, and Cys90–Cys101. His62 is a catalytic residue. Asp104 is an active-site residue.

This sequence belongs to the phospholipase A2 family. Group II subfamily. K49 sub-subfamily. In terms of tissue distribution, expressed by the venom gland.

The protein localises to the secreted. It catalyses the reaction a 1,2-diacyl-sn-glycero-3-phosphocholine + H2O = a 1-acyl-sn-glycero-3-phosphocholine + a fatty acid + H(+). Its function is as follows. PLA2 catalyzes the calcium-dependent hydrolysis of the 2-acyl groups in 3-sn-phosphoglycerides. The sequence is that of Basic phospholipase A2 Tgc-K49 from Trimeresurus gracilis (Kikuchi habu).